The chain runs to 180 residues: Small ribosomal subunit protein bS18 (180 aa).

Disordered stretches follow at residues 1–26 (MKNK…AHKV) and 53–82 (YSDK…DKES).

This sequence belongs to the bacterial ribosomal protein bS18 family. As to quaternary structure, part of the 30S ribosomal subunit. Forms a tight heterodimer with protein bS6.

Functionally, binds as a heterodimer with protein bS6 to the central domain of the 16S rRNA, where it helps stabilize the platform of the 30S subunit. The sequence is that of Small ribosomal subunit protein bS18 from Karelsulcia muelleri (strain GWSS) (Sulcia muelleri).